The following is a 206-amino-acid chain: Platelet glycoprotein Ib beta chain (206 aa).

Residues 1-26 (MGSRPRGALSLLLLLLAPPSRPASGC) form the signal peptide. 2 disulfides stabilise this stretch: C26-C32 and C30-C39. Residues 27–55 (PAPCRCSETRVDCGRRGLTWASLPAAFPP) form the LRRNT domain. Over 27–150 (PAPCRCSETR…CAPGLLCWGA (124 aa)) the chain is Extracellular. Residues 60–83 (LVLTDNNLTALPPGLLDTLPALRR) form an LRR repeat. Residues 89-143 (NPWRCDCRLLPLRAWLAGRPEREFYRDLRCVAPLALRGRLLPYVAEDELRAACAP) enclose the LRRCT domain. Disulfide bonds link C93–C118 and C95–C141. Residues 151-171 (LVAQLALLVLGLLHALLLALL) traverse the membrane as a helical segment. Residues 172–206 (LSRLRRLRAQARARSTREFSLTAPLVAESAGGGAS) are Cytoplasmic-facing. At S186 the chain carries Phosphoserine. Phosphoserine; by PKA is present on S191. Residue T193 is modified to Phosphothreonine. S200 carries the post-translational modification Phosphoserine.

In terms of assembly, two GP-Ib beta are disulfide-linked to one GP-Ib alpha. GP-IX is complexed with the GP-Ib heterodimer via a non covalent linkage. Interacts with TRAF4.

It is found in the membrane. Functionally, gp-Ib, a surface membrane protein of platelets, participates in the formation of platelet plugs by binding to von Willebrand factor, which is already bound to the subendothelium. The polypeptide is Platelet glycoprotein Ib beta chain (Gp1bb) (Rattus norvegicus (Rat)).